The primary structure comprises 267 residues: MTQIHPTALVDPKAELAADVSVGPFSIVGPNVRIGSGTRIGSHTTVEGHTTIGAGNNIGPYASVGGVPQDMKYRNEPTRLEIGDRNTIREFTTIHTGTVQDRGLTSIGNDNWIMAYVHIAHDCMVGNHTVFSSNAQIAGHVEVGDWAILGGMSGVHQFVRIGAHAMLGGASALVQDVPPFVIAASDKSGNKATPHGINVEGLRRRGFDAGQIAALRQAYKLLYKSDLSFDEARTEISALLAQVDAGTAAPLQAFVDFLAATQRGIVR.

It belongs to the transferase hexapeptide repeat family. LpxA subfamily. As to quaternary structure, homotrimer.

The protein localises to the cytoplasm. The catalysed reaction is a (3R)-hydroxyacyl-[ACP] + UDP-N-acetyl-alpha-D-glucosamine = a UDP-3-O-[(3R)-3-hydroxyacyl]-N-acetyl-alpha-D-glucosamine + holo-[ACP]. The protein operates within glycolipid biosynthesis; lipid IV(A) biosynthesis; lipid IV(A) from (3R)-3-hydroxytetradecanoyl-[acyl-carrier-protein] and UDP-N-acetyl-alpha-D-glucosamine: step 1/6. In terms of biological role, involved in the biosynthesis of lipid A, a phosphorylated glycolipid that anchors the lipopolysaccharide to the outer membrane of the cell. The protein is Acyl-[acyl-carrier-protein]--UDP-N-acetylglucosamine O-acyltransferase of Cupriavidus taiwanensis (strain DSM 17343 / BCRC 17206 / CCUG 44338 / CIP 107171 / LMG 19424 / R1) (Ralstonia taiwanensis (strain LMG 19424)).